A 335-amino-acid chain; its full sequence is DNA-directed RNA polymerase subunit alpha (335 aa).

Positions 1–233 are alpha N-terminal domain (alpha-NTD); that stretch reads MTRTANEFLT…QQIAIFVDLQ (233 aa). The interval 247-335 is alpha C-terminal domain (alpha-CTD); sequence VDPILLRPVD…MDDRFAYRSR (89 aa).

The protein belongs to the RNA polymerase alpha chain family. In terms of assembly, homodimer. The RNAP catalytic core consists of 2 alpha, 1 beta, 1 beta' and 1 omega subunit. When a sigma factor is associated with the core the holoenzyme is formed, which can initiate transcription.

The enzyme catalyses RNA(n) + a ribonucleoside 5'-triphosphate = RNA(n+1) + diphosphate. Functionally, DNA-dependent RNA polymerase catalyzes the transcription of DNA into RNA using the four ribonucleoside triphosphates as substrates. The protein is DNA-directed RNA polymerase subunit alpha of Acinetobacter baylyi (strain ATCC 33305 / BD413 / ADP1).